The sequence spans 425 residues: Serine--tRNA ligase (425 aa).

L-serine is bound at residue 231–233 (TAE). An ATP-binding site is contributed by 262 to 264 (RSE). Glutamate 285 serves as a coordination point for L-serine. 349–352 (EISS) is an ATP binding site. Serine 385 contributes to the L-serine binding site.

The protein belongs to the class-II aminoacyl-tRNA synthetase family. Type-1 seryl-tRNA synthetase subfamily. In terms of assembly, homodimer. The tRNA molecule binds across the dimer.

The protein localises to the cytoplasm. The catalysed reaction is tRNA(Ser) + L-serine + ATP = L-seryl-tRNA(Ser) + AMP + diphosphate + H(+). It carries out the reaction tRNA(Sec) + L-serine + ATP = L-seryl-tRNA(Sec) + AMP + diphosphate + H(+). Its pathway is aminoacyl-tRNA biosynthesis; selenocysteinyl-tRNA(Sec) biosynthesis; L-seryl-tRNA(Sec) from L-serine and tRNA(Sec): step 1/1. Functionally, catalyzes the attachment of serine to tRNA(Ser). Is also able to aminoacylate tRNA(Sec) with serine, to form the misacylated tRNA L-seryl-tRNA(Sec), which will be further converted into selenocysteinyl-tRNA(Sec). This Desulfosudis oleivorans (strain DSM 6200 / JCM 39069 / Hxd3) (Desulfococcus oleovorans) protein is Serine--tRNA ligase.